The primary structure comprises 425 residues: Probable isoprenylcysteine alpha-carbonyl methylesterase ICMEL1 (425 aa).

The span at 1–10 (MQVELADRAA) shows a compositional bias: basic and acidic residues. Positions 1-42 (MQVELADRAAARPSETGEAPPSSPAAAAAASAAAEDAPLLPG) are disordered. Over residues 24-34 (PAAAAAASAAA) the composition is skewed to low complexity. 2 helical membrane passes run 99–119 (FLAL…VVYY) and 154–174 (VVAF…GALL). Substrate contacts are provided by residues 160-162 (GGA) and 231-233 (QSA). Residues Ser232, Asp334, and His366 contribute to the active site.

The protein belongs to the AB hydrolase superfamily. Isoprenylcysteine methylesterase family.

Its subcellular location is the endoplasmic reticulum membrane. It is found in the golgi apparatus membrane. The catalysed reaction is [protein]-C-terminal S-[(2E,6E)-farnesyl]-L-cysteine methyl ester + H2O = [protein]-C-terminal S-[(2E,6E)-farnesyl]-L-cysteine + methanol + H(+). Its function is as follows. Catalyzes the demethylation of isoprenylcysteine methylesters. This is Probable isoprenylcysteine alpha-carbonyl methylesterase ICMEL1 (IMCEL1) from Oryza sativa subsp. japonica (Rice).